The following is a 122-amino-acid chain: Small ribosomal subunit protein uS13 (122 aa).

A disordered region spans residues 95–122 (SLPCRGQRTSTNARTRKGPKRAAVKKKK). Over residues 108-122 (RTRKGPKRAAVKKKK) the composition is skewed to basic residues.

The protein belongs to the universal ribosomal protein uS13 family. Part of the 30S ribosomal subunit. Forms a loose heterodimer with protein S19. Forms two bridges to the 50S subunit in the 70S ribosome.

In terms of biological role, located at the top of the head of the 30S subunit, it contacts several helices of the 16S rRNA. In the 70S ribosome it contacts the 23S rRNA (bridge B1a) and protein L5 of the 50S subunit (bridge B1b), connecting the 2 subunits; these bridges are implicated in subunit movement. Contacts the tRNAs in the A and P-sites. This is Small ribosomal subunit protein uS13 from Desulforapulum autotrophicum (strain ATCC 43914 / DSM 3382 / VKM B-1955 / HRM2) (Desulfobacterium autotrophicum).